The sequence spans 109 residues: Flagellar hook-basal body complex protein FliE (109 aa).

It belongs to the FliE family.

The protein resides in the bacterial flagellum basal body. This is Flagellar hook-basal body complex protein FliE from Pseudomonas fluorescens (strain Pf0-1).